The following is a 598-amino-acid chain: MTISLARYNFFISLELLKTLVAKGVKYFVLCPGSRSGPLALAAASLSKRKELTLITSIDERSAAFLALGISAASGQVSCVITTSGSAVANLLPAAVEADRSCHPLLFLTADRPLRLKECGANQAVNQQDFLKSVCRHFDESPKEGIHLISKERLTSLVGKSFEMASNIPGPVHINLAYEEPLHPCEIDQNKVLDGWGIEGFLKEKVTPNKVEVFKSFQSLKLPKLDPFSLGIIILGPWRGKVKQLNSFRGALKQWQKLTGWPILADPLSGVENDQEGLINHWDLFFSIGLFEKIKEIQVLRLGPIPPSRELQTWLKKPGKFQLLITEGDCRNLDPIGGSTQFSEGFSCWVDKMLECIPVKPAIDKKIVSQKLTKELIKYDLFINHWLDKRLFRNGLITEPALARLLPRLLPDSIPVMIASSSPIRDWLSYSGEGAFLRRCFGFRGASGIDGTLSMGMGLSIIMGRMVLVTGDLALLHDTNGWLFSKDKNISLIVIMIDNGGGGIFNQLNIDRIKEGDFEEIFLMPQQVCHLTLAKAYGLKYKQVACLDDLEKAIEWSFSLSTNVLIRVCTNSIEDHRLRVNLSDDLKKTLSENLSSFD.

The protein belongs to the TPP enzyme family. MenD subfamily. In terms of assembly, homodimer. The cofactor is Mg(2+). Requires Mn(2+) as cofactor. Thiamine diphosphate serves as cofactor.

It carries out the reaction isochorismate + 2-oxoglutarate + H(+) = 5-enolpyruvoyl-6-hydroxy-2-succinyl-cyclohex-3-ene-1-carboxylate + CO2. It participates in quinol/quinone metabolism; 1,4-dihydroxy-2-naphthoate biosynthesis; 1,4-dihydroxy-2-naphthoate from chorismate: step 2/7. The protein operates within cofactor biosynthesis; phylloquinone biosynthesis. Catalyzes the thiamine diphosphate-dependent decarboxylation of 2-oxoglutarate and the subsequent addition of the resulting succinic semialdehyde-thiamine pyrophosphate anion to isochorismate to yield 2-succinyl-5-enolpyruvyl-6-hydroxy-3-cyclohexene-1-carboxylate (SEPHCHC). This Prochlorococcus marinus (strain NATL1A) protein is 2-succinyl-5-enolpyruvyl-6-hydroxy-3-cyclohexene-1-carboxylate synthase.